The chain runs to 1065 residues: DNA polymerase III subunit alpha (1065 aa).

The protein belongs to the DNA polymerase type-C family. DnaE subfamily. As to quaternary structure, DNA polymerase III contains a core (composed of alpha, epsilon and theta chains) that associates with a tau subunit. This core dimerizes to form the PolIII' complex. PolIII' associates with the gamma complex (composed of gamma, delta, delta', psi and chi chains) and with the beta chain to form the complete DNA polymerase III complex.

It is found in the cytoplasm. It catalyses the reaction DNA(n) + a 2'-deoxyribonucleoside 5'-triphosphate = DNA(n+1) + diphosphate. In terms of biological role, DNA polymerase III is a complex, multichain enzyme responsible for most of the replicative synthesis in bacteria. This DNA polymerase also exhibits 3' to 5' exonuclease activity. The alpha chain is the DNA polymerase. The protein is DNA polymerase III subunit alpha (dnaE) of Staphylococcus aureus (strain MSSA476).